The chain runs to 91 residues: Small ribosomal subunit protein bS20 (91 aa).

Basic and acidic residues predominate over residues 1 to 18 (MPLHKSAEKRLRQSERRN). The interval 1–26 (MPLHKSAEKRLRQSERRNARNRSRKK) is disordered.

This sequence belongs to the bacterial ribosomal protein bS20 family.

Its function is as follows. Binds directly to 16S ribosomal RNA. This chain is Small ribosomal subunit protein bS20, found in Pelodictyon phaeoclathratiforme (strain DSM 5477 / BU-1).